The sequence spans 358 residues: Probable isocitrate dehydrogenase [NAD] subunit alpha, mitochondrial (358 aa).

Residues R108, R118, R139, and D226 each contribute to the substrate site. Mg(2+) is bound by residues D226, D250, and D254.

This sequence belongs to the isocitrate and isopropylmalate dehydrogenases family. In terms of assembly, heterooligomer of subunits alpha, beta, and gamma in the apparent ratio of 2:1:1. The cofactor is Mg(2+). It depends on Mn(2+) as a cofactor.

It is found in the mitochondrion. It carries out the reaction D-threo-isocitrate + NAD(+) = 2-oxoglutarate + CO2 + NADH. In Caenorhabditis elegans, this protein is Probable isocitrate dehydrogenase [NAD] subunit alpha, mitochondrial (idha-1).